The primary structure comprises 213 residues: LIM domain-containing protein PLIM2c (213 aa).

LIM zinc-binding domains follow at residues 9–69 and 105–165; these read DKCK…LFKE and DKCA…LFLE. The interval 177-213 is disordered; that stretch reads ANHRRSTAEEDKTEPKEDEANPTEEETSDAAAEEHES. The segment covering 182–195 has biased composition (basic and acidic residues); it reads STAEEDKTEPKEDE.

In terms of assembly, interacts with F-actin. Exclusively expressed in pollen grains.

Its subcellular location is the cytoplasm. The protein resides in the cytoskeleton. Its function is as follows. Binds to actin filaments and promotes cross-linking into thick bundles. Has an actin-stabilizing activity. Associates predominantly with long and dynamic actin bundles in the shank of growing pollen tubes. The actin regulatory activities are inhibited by pH &gt; 6.8 and/or high [Ca(2+)]. The polypeptide is LIM domain-containing protein PLIM2c (Arabidopsis thaliana (Mouse-ear cress)).